The following is a 284-amino-acid chain: Diaminopimelate epimerase (284 aa).

Substrate contacts are provided by Asn13 and Asn70. The active-site Proton donor is Cys79. Substrate is bound by residues 80 to 81 (GN), Asn167, Asn200, and 218 to 219 (ER). Cys227 (proton acceptor) is an active-site residue. 228 to 229 (GT) is a substrate binding site.

It belongs to the diaminopimelate epimerase family. Homodimer.

The protein resides in the cytoplasm. The enzyme catalyses (2S,6S)-2,6-diaminopimelate = meso-2,6-diaminopimelate. It functions in the pathway amino-acid biosynthesis; L-lysine biosynthesis via DAP pathway; DL-2,6-diaminopimelate from LL-2,6-diaminopimelate: step 1/1. Catalyzes the stereoinversion of LL-2,6-diaminopimelate (L,L-DAP) to meso-diaminopimelate (meso-DAP), a precursor of L-lysine and an essential component of the bacterial peptidoglycan. This chain is Diaminopimelate epimerase, found in Prochlorococcus marinus (strain NATL2A).